Reading from the N-terminus, the 662-residue chain is Biosynthetic arginine decarboxylase (662 aa).

The residue at position 127 (lysine 127) is an N6-(pyridoxal phosphate)lysine. 307–317 (FDVGGGLGVDY) lines the substrate pocket.

It belongs to the Orn/Lys/Arg decarboxylase class-II family. SpeA subfamily. Homotetramer. Mg(2+) is required as a cofactor. Pyridoxal 5'-phosphate serves as cofactor.

The protein resides in the periplasm. It catalyses the reaction L-arginine + H(+) = agmatine + CO2. Its pathway is amine and polyamine biosynthesis; agmatine biosynthesis; agmatine from L-arginine: step 1/1. In terms of biological role, catalyzes the biosynthesis of agmatine from arginine. The polypeptide is Biosynthetic arginine decarboxylase (Shigella flexneri).